We begin with the raw amino-acid sequence, 189 residues long: MTSSAGQGGGALSTRGGAATKRMKWAVELSLGNSRSRSDRQGKDGDVMYPVGYSDKPVPDTSVQEADRNLVEKRCWDVALGPLKQIPMNLFIMYMSGNTISIFPIMMVCMMAWRPIQALMSMSATFKLLESSSQQWLQGLVYLIGNLLGSALAIYKCQSMGLLPTHSSDWLAFIEPPQRLEIMGGGMVM.

Positions 1-11 (MTSSAGQGGGA) are enriched in gly residues. Disordered stretches follow at residues 1–20 (MTSSAGQGGGALSTRGGAAT) and 30–63 (SLGNSRSRSDRQGKDGDVMYPVGYSDKPVPDTSV). Topologically, residues 1 to 72 (MTSSAGQGGG…VQEADRNLVE (72 aa)) are cytoplasmic. Over residues 36–46 (SRSDRQGKDGD) the composition is skewed to basic and acidic residues. A helical transmembrane segment spans residues 73 to 93 (KRCWDVALGPLKQIPMNLFIM). Residues 94-104 (YMSGNTISIFP) lie on the Lumenal side of the membrane. The helical transmembrane segment at 105–126 (IMMVCMMAWRPIQALMSMSATF) threads the bilayer. Residues 127–133 (KLLESSS) lie on the Cytoplasmic side of the membrane. Residues 134–154 (QQWLQGLVYLIGNLLGSALAI) form a helical membrane-spanning segment. Residues 155–189 (YKCQSMGLLPTHSSDWLAFIEPPQRLEIMGGGMVM) are Lumenal-facing.

It belongs to the EMC4 family. In terms of assembly, component of the ER membrane protein complex (EMC).

It localises to the endoplasmic reticulum membrane. Its function is as follows. Part of the endoplasmic reticulum membrane protein complex (EMC) that enables the energy-independent insertion into endoplasmic reticulum membranes of newly synthesized membrane proteins. Preferentially accommodates proteins with transmembrane domains that are weakly hydrophobic or contain destabilizing features such as charged and aromatic residues. Involved in the cotranslational insertion of multi-pass membrane proteins in which stop-transfer membrane-anchor sequences become ER membrane spanning helices. It is also required for the post-translational insertion of tail-anchored/TA proteins in endoplasmic reticulum membranes. By mediating the proper cotranslational insertion of N-terminal transmembrane domains in an N-exo topology, with translocated N-terminus in the lumen of the ER, controls the topology of multi-pass membrane proteins like the G protein-coupled receptors. By regulating the insertion of various proteins in membranes, it is indirectly involved in many cellular processes. The chain is ER membrane protein complex subunit 4 (emc4) from Danio rerio (Zebrafish).